The sequence spans 335 residues: Mycobacterial beta-ketoacyl-[acyl-carrier-protein] synthase III (335 aa).

Catalysis depends on residues Cys122 and His258. Residues 259–263 form an ACP-binding region; the sequence is QANSR. Residue Asn289 is part of the active site.

It belongs to the thiolase-like superfamily. FabH family. As to quaternary structure, homodimer.

It localises to the cytoplasm. It carries out the reaction malonyl-[ACP] + dodecanoyl-CoA + H(+) = 3-oxotetradecanoyl-[ACP] + CO2 + CoA. It participates in lipid metabolism; fatty acid biosynthesis. It functions in the pathway lipid metabolism; mycolic acid biosynthesis. In terms of biological role, catalyzes the condensation reaction of fatty acid synthesis by the addition to an acyl acceptor of two carbons from malonyl-ACP. Catalyzes the first condensation reaction which initiates fatty acid synthesis and may therefore play a role in governing the total rate of fatty acid production. Possesses both acetoacetyl-ACP synthase and acetyl transacylase activities. Its substrate specificity determines the biosynthesis of branched-chain and/or straight-chain of fatty acids. The sequence is that of Mycobacterial beta-ketoacyl-[acyl-carrier-protein] synthase III from Mycolicibacterium paratuberculosis (strain ATCC BAA-968 / K-10) (Mycobacterium paratuberculosis).